Reading from the N-terminus, the 392-residue chain is Tyrosine--tRNA ligase (392 aa).

A 'HIGH' region motif is present at residues 39–48; sequence PTAPDIHIGH. The 'KMSKS' region motif lies at 223 to 227; that stretch reads KMSKS. Lysine 226 is an ATP binding site. The S4 RNA-binding domain occupies 331–391; the sequence is IGIAQLLKQA…GKRRFARVVL (61 aa).

Belongs to the class-I aminoacyl-tRNA synthetase family. TyrS type 2 subfamily. Homodimer.

Its subcellular location is the cytoplasm. The enzyme catalyses tRNA(Tyr) + L-tyrosine + ATP = L-tyrosyl-tRNA(Tyr) + AMP + diphosphate + H(+). In terms of biological role, catalyzes the attachment of tyrosine to tRNA(Tyr) in a two-step reaction: tyrosine is first activated by ATP to form Tyr-AMP and then transferred to the acceptor end of tRNA(Tyr). This Ralstonia nicotianae (strain ATCC BAA-1114 / GMI1000) (Ralstonia solanacearum) protein is Tyrosine--tRNA ligase.